The primary structure comprises 155 residues: Small ribosomal subunit protein uS7cz/uS7cy (155 aa).

Belongs to the universal ribosomal protein uS7 family. Part of the 30S ribosomal subunit.

It is found in the plastid. Its subcellular location is the chloroplast. In terms of biological role, one of the primary rRNA binding proteins, it binds directly to 16S rRNA where it nucleates assembly of the head domain of the 30S subunit. The sequence is that of Small ribosomal subunit protein uS7cz/uS7cy (rps7-A) from Atropa belladonna (Belladonna).